We begin with the raw amino-acid sequence, 195 residues long: Nascent polypeptide-associated complex subunit alpha (195 aa).

Disordered stretches follow at residues 1–59 and 132–153; these read MTGS…SRSE and TREA…EEDS. Residues 7 to 16 are compositionally biased toward basic and acidic residues; that stretch reads TRQKEVKEPQ. A compositionally biased stretch (acidic residues) spans 19–33; sequence VSDDSDNEAVEQELT. The span at 47–59 shows a compositional bias: basic and acidic residues; the sequence is DHIDKQAKQSRSE. The NAC-A/B domain occupies 56–121; the sequence is SRSEKKARKL…AKIEDLTQHA (66 aa). Acidic residues predominate over residues 142–153; that stretch reads EEDENEDVEEDS.

This sequence belongs to the NAC-alpha family. As to quaternary structure, may be part of the nascent polypeptide-associated complex (NAC), which is a heterodimer of icd-2 and icd-1 (via NAC-A/B domains).

The protein localises to the cytoplasm. May prevent inappropriate targeting of non-secretory polypeptides to the endoplasmic reticulum (ER). Plays a role in the response to heat stress. This is Nascent polypeptide-associated complex subunit alpha from Caenorhabditis elegans.